We begin with the raw amino-acid sequence, 570 residues long: AT-rich interactive domain-containing protein 3A (570 aa).

The tract at residues 102–215 (AGVPNSSSGH…LAPQAQSQHH (114 aa)) is disordered. A compositionally biased stretch (acidic residues) spans 120-160 (DIDDEDDEDDDPELDRGMDDEERDMDEDDSMNEGGGDEDLE). S179 carries the post-translational modification Phosphoserine. Positions 232–324 (DEKRKEFLDD…YLYPYECEKR (93 aa)) constitute an ARID domain. Residue S356 is modified to Phosphoserine. The region spanning 429 to 523 (AALEQLREKL…GVLFARKPAI (95 aa)) is the REKLES domain. Positions 430–473 (ALEQLREKLESGEPPEKKVMLMAEEQQRIMQHALQQNLFAMATQ) are important for nuclear localization. The tract at residues 475–495 (PMNIKLNNRDDRQETALNLST) is homodimerization. Residues 519–531 (RKPAIGFMPSSQR) are important for cytoplasmic localization. Residues 528 to 570 (SSQRVHHQHSSQGKSNSPGLSSHIQPSSSASSSASSHGPATSP) are disordered. 2 positions are modified to phosphoserine: S542 and S569. The segment covering 548–570 (SSHIQPSSSASSSASSHGPATSP) has biased composition (low complexity).

In terms of assembly, homodimer.

The protein localises to the nucleus. It localises to the cytoplasm. Transcription factor. The protein is AT-rich interactive domain-containing protein 3A (arid3a) of Danio rerio (Zebrafish).